The sequence spans 353 residues: DNA-directed RNA polymerase subunit alpha (353 aa).

An alpha N-terminal domain (alpha-NTD) region spans residues 1-234; that stretch reads MVREKVTVST…DLFIPFLHTE (234 aa). The interval 267–353 is alpha C-terminal domain (alpha-CTD); the sequence is KRALKSIFID…LAQLIDSKSG (87 aa).

It belongs to the RNA polymerase alpha chain family. In plastids the minimal PEP RNA polymerase catalytic core is composed of four subunits: alpha, beta, beta', and beta''. When a (nuclear-encoded) sigma factor is associated with the core the holoenzyme is formed, which can initiate transcription.

It is found in the plastid. It localises to the chloroplast. It catalyses the reaction RNA(n) + a ribonucleoside 5'-triphosphate = RNA(n+1) + diphosphate. DNA-dependent RNA polymerase catalyzes the transcription of DNA into RNA using the four ribonucleoside triphosphates as substrates. This Daucus carota (Wild carrot) protein is DNA-directed RNA polymerase subunit alpha.